We begin with the raw amino-acid sequence, 400 residues long: Bifunctional arginine demethylase and lysyl-hydroxylase psr-1 (400 aa).

The JmjC domain occupies 146 to 310 (RKTKKLSEDY…LVWPKTVKGR (165 aa)). Position 189 (Thr-189) interacts with substrate. His-192 and Asp-194 together coordinate Fe cation. Asn-202 is a binding site for 2-oxoglutarate. Lys-209 provides a ligand contact to substrate. His-278 lines the Fe cation pocket. Thr-290 is a 2-oxoglutarate binding site. The segment at 342 to 400 (DMNESSSDSSSSSSSSDDSSDESDCDDSGRCGGRKRKNDDRSNECPEKMSTTYFQNSLV) is disordered. Low complexity predominate over residues 346-358 (SSSDSSSSSSSSD). Residues 378-388 (KNDDRSNECPE) are compositionally biased toward basic and acidic residues. The segment covering 390–400 (MSTTYFQNSLV) has biased composition (polar residues).

The protein belongs to the JMJD6 family. Interacts with ced-5 and ced-12. Fe(2+) serves as cofactor.

It is found in the nucleus. Dioxygenase that can both act as a histone arginine demethylase and a lysyl-hydroxylase. The sequence is that of Bifunctional arginine demethylase and lysyl-hydroxylase psr-1 (psr-1) from Caenorhabditis elegans.